The chain runs to 337 residues: uncharacterized protein (337 aa).

Positions 248–276 (NELKAETTIQVLREQLRQEKKLKEQVLSL) form a coiled coil. A disordered region spans residues 285–337 (GGRGEEFGKPDETPSSASVGDDNFPSSTNHTFEARRRPSSLSSGGALKPSKIL). Residues 287 to 296 (RGEEFGKPDE) are compositionally biased toward basic and acidic residues. The span at 297–315 (TPSSASVGDDNFPSSTNHT) shows a compositional bias: polar residues.

This is an uncharacterized protein from Invertebrate iridescent virus 3 (IIV-3).